A 327-amino-acid polypeptide reads, in one-letter code: MKFENFNILATAGYTPERVVPNSELTTMMTTSDEWIVQRTGIHQRHVVTAERTSDLCTRVAQQLLQRSGLQATDIDYIVVATMSPDYQTPAVSAQVQGNIGATKAVALDVNAACSGFVYGLQVVHRLLMGDSPKTALLIGGETLSRLVDWQDRSTAVLFGDGAGGVVLTSALAQDGAFIAADYRTMGEQGRYLTAGANGVDSPFASDPQPVLPFFKMNGRRVYNFAIKQVPASLRRVLDQGHLAVTDVDYFILHQANQRIIERIAEDLTGSMAQFPVNIGQYGNTAAASEPLLLNQLVTSHVIKRGDVLALSGFGGGLTIGTMILRY.

Catalysis depends on residues Cys-114 and His-254. The segment at 255–259 is ACP-binding; the sequence is QANQR. Residue Asn-284 is part of the active site.

The protein belongs to the thiolase-like superfamily. FabH family. Homodimer.

The protein localises to the cytoplasm. It catalyses the reaction malonyl-[ACP] + acetyl-CoA + H(+) = 3-oxobutanoyl-[ACP] + CO2 + CoA. It functions in the pathway lipid metabolism; fatty acid biosynthesis. In terms of biological role, catalyzes the condensation reaction of fatty acid synthesis by the addition to an acyl acceptor of two carbons from malonyl-ACP. Catalyzes the first condensation reaction which initiates fatty acid synthesis and may therefore play a role in governing the total rate of fatty acid production. Possesses both acetoacetyl-ACP synthase and acetyl transacylase activities. Its substrate specificity determines the biosynthesis of branched-chain and/or straight-chain of fatty acids. This chain is Beta-ketoacyl-[acyl-carrier-protein] synthase III, found in Levilactobacillus brevis (strain ATCC 367 / BCRC 12310 / CIP 105137 / JCM 1170 / LMG 11437 / NCIMB 947 / NCTC 947) (Lactobacillus brevis).